The following is a 339-amino-acid chain: Dihydroorotate dehydrogenase (quinone) (339 aa).

Residues 61-65 and Thr85 each bind FMN; that span reads AGLDK. Residue Lys65 participates in substrate binding. 110–114 is a binding site for substrate; that stretch reads NRMGF. The FMN site is built by Asn138 and Asn171. Asn171 is a binding site for substrate. The Nucleophile role is filled by Ser174. Asn176 provides a ligand contact to substrate. Lys216 and Thr244 together coordinate FMN. 245–246 lines the substrate pocket; that stretch reads NT. FMN-binding positions include Gly267, Gly296, and 317–318; that span reads YS.

The protein belongs to the dihydroorotate dehydrogenase family. Type 2 subfamily. In terms of assembly, monomer. It depends on FMN as a cofactor.

It localises to the cell membrane. It catalyses the reaction (S)-dihydroorotate + a quinone = orotate + a quinol. Its pathway is pyrimidine metabolism; UMP biosynthesis via de novo pathway; orotate from (S)-dihydroorotate (quinone route): step 1/1. Catalyzes the conversion of dihydroorotate to orotate with quinone as electron acceptor. The sequence is that of Dihydroorotate dehydrogenase (quinone) from Teredinibacter turnerae (strain ATCC 39867 / T7901).